The primary structure comprises 58 residues: Probable spore germination protein GerPD (58 aa).

Functionally, required for the formation of functionally normal spores. Could be involved in the establishment of normal spore coat structure and/or permeability, which allows the access of germinants to their receptor. The polypeptide is Probable spore germination protein GerPD (gerPD) (Bacillus subtilis (strain 168)).